A 314-amino-acid polypeptide reads, in one-letter code: Ribosome production factor 2 homolog (314 aa).

Positions 28-238 (KKTLILHGTK…IRRNRLPNDS (211 aa)) constitute a Brix domain. Positions 238 to 314 (SLMKEAMRTS…VAKKMKVSSE (77 aa)) are disordered. 2 stretches are compositionally biased toward basic and acidic residues: residues 239 to 249 (LMKEAMRTSKD) and 275 to 314 (QKLK…VSSE).

The protein belongs to the RPF2 family.

The protein localises to the nucleus. It localises to the nucleolus. The chain is Ribosome production factor 2 homolog from Arabidopsis thaliana (Mouse-ear cress).